The sequence spans 153 residues: Phosphopantetheine adenylyltransferase (153 aa).

Residue serine 11 participates in substrate binding. Residues 11-12 and histidine 19 contribute to the ATP site; that span reads SF. Substrate contacts are provided by lysine 43, threonine 75, and arginine 89. ATP contacts are provided by residues 90–92, glutamate 100, and 124–130; these read GIR and LSFISSS.

It belongs to the bacterial CoaD family. Homohexamer. Mg(2+) is required as a cofactor.

Its subcellular location is the cytoplasm. The catalysed reaction is (R)-4'-phosphopantetheine + ATP + H(+) = 3'-dephospho-CoA + diphosphate. Its pathway is cofactor biosynthesis; coenzyme A biosynthesis; CoA from (R)-pantothenate: step 4/5. Its function is as follows. Reversibly transfers an adenylyl group from ATP to 4'-phosphopantetheine, yielding dephospho-CoA (dPCoA) and pyrophosphate. This chain is Phosphopantetheine adenylyltransferase, found in Porphyromonas gingivalis (strain ATCC 33277 / DSM 20709 / CIP 103683 / JCM 12257 / NCTC 11834 / 2561).